Consider the following 155-residue polypeptide: MAKGEGKVVAQNKKARHDYTIVDTLEAGMVLTGTEIKSVRAARINLKDGFAQVKNGEVWLSNVHIAPYEEGNIWNQEPERRRKLLLHKKQIQKLEQETKGTGMTLVPLKVYIKDGYAKLLLGLAKGKHDYDKRESIKRREQNRDIARVMKAVNQR.

This sequence belongs to the SmpB family.

It is found in the cytoplasm. Functionally, required for rescue of stalled ribosomes mediated by trans-translation. Binds to transfer-messenger RNA (tmRNA), required for stable association of tmRNA with ribosomes. tmRNA and SmpB together mimic tRNA shape, replacing the anticodon stem-loop with SmpB. tmRNA is encoded by the ssrA gene; the 2 termini fold to resemble tRNA(Ala) and it encodes a 'tag peptide', a short internal open reading frame. During trans-translation Ala-aminoacylated tmRNA acts like a tRNA, entering the A-site of stalled ribosomes, displacing the stalled mRNA. The ribosome then switches to translate the ORF on the tmRNA; the nascent peptide is terminated with the 'tag peptide' encoded by the tmRNA and targeted for degradation. The ribosome is freed to recommence translation, which seems to be the essential function of trans-translation. This is SsrA-binding protein from Streptococcus pneumoniae (strain Hungary19A-6).